A 305-amino-acid polypeptide reads, in one-letter code: Popeye domain-containing protein 3 (305 aa).

Asparagine 4 carries N-linked (GlcNAc...) asparagine glycosylation. A run of 3 helical transmembrane segments spans residues 34 to 54, 55 to 75, and 77 to 99; these read SILF…LYVF, SLLG…VCAA, and IFSW…TYQV. A disordered region spans residues 273-305; sequence PETPPVPPPRRLQRRSSGRPRPGVPNCSSPRKQ. Asparagine 298 is a glycosylation site (N-linked (GlcNAc...) asparagine).

It belongs to the popeye family. As to expression, expressed first preferentially in atrium and later also in the subepicardial compact layer of the ventricles.

Its subcellular location is the membrane. May play a role in the maintenance of heart function mediated, at least in part, through cAMP-binding. May play a role in the regulation of KCNK2-mediated current amplitude. The sequence is that of Popeye domain-containing protein 3 (POPDC3) from Gallus gallus (Chicken).